The primary structure comprises 682 residues: 1,4-alpha-glucan-branching enzyme (682 aa).

Trp-88 and Lys-124 together coordinate (1,4-alpha-D-glucosyl)n. Residue Asp-342 is the Nucleophile of the active site. The active-site Proton donor is Glu-397.

It belongs to the glycosyl hydrolase 13 family. GlgB subfamily.

The protein resides in the cytoplasm. The catalysed reaction is Transfers a segment of a (1-&gt;4)-alpha-D-glucan chain to a primary hydroxy group in a similar glucan chain.. It functions in the pathway glycan biosynthesis; glycogen biosynthesis. Glycogen-branching enzyme participates in the glycogen biosynthetic process along with glycogenin and glycogen synthase. Generates alpha-1,6-glucosidic branches from alpha-1,4-linked glucose chains, to increase solubility of the glycogen polymer. This chain is 1,4-alpha-glucan-branching enzyme, found in Cryptococcus neoformans var. grubii serotype A (strain H99 / ATCC 208821 / CBS 10515 / FGSC 9487) (Filobasidiella neoformans var. grubii).